The primary structure comprises 200 residues: NAD(P)H dehydrogenase (quinone) (200 aa).

The region spanning 4–190 (VLVLYYSTYG…DGARFQGRLV (187 aa)) is the Flavodoxin-like domain. Residues 10–15 (STYGHL) and 78–80 (TRF) each bind FMN. Tyr-12 serves as a coordination point for NAD(+). Trp-98 serves as a coordination point for substrate. FMN-binding positions include 113–119 (STATQHG) and His-134.

Belongs to the WrbA family. It depends on FMN as a cofactor.

It catalyses the reaction a quinone + NADH + H(+) = a quinol + NAD(+). The enzyme catalyses a quinone + NADPH + H(+) = a quinol + NADP(+). The polypeptide is NAD(P)H dehydrogenase (quinone) (Acidovorax ebreus (strain TPSY) (Diaphorobacter sp. (strain TPSY))).